The primary structure comprises 313 residues: Beta-ketoacyl-[acyl-carrier-protein] synthase III (313 aa).

Active-site residues include Cys112 and His238. The segment at 239–243 (QANIR) is ACP-binding. Asn268 is a catalytic residue.

Belongs to the thiolase-like superfamily. FabH family. In terms of assembly, homodimer.

It is found in the cytoplasm. It carries out the reaction malonyl-[ACP] + acetyl-CoA + H(+) = 3-oxobutanoyl-[ACP] + CO2 + CoA. Its pathway is lipid metabolism; fatty acid biosynthesis. Functionally, catalyzes the condensation reaction of fatty acid synthesis by the addition to an acyl acceptor of two carbons from malonyl-ACP. Catalyzes the first condensation reaction which initiates fatty acid synthesis and may therefore play a role in governing the total rate of fatty acid production. Possesses both acetoacetyl-ACP synthase and acetyl transacylase activities. Its substrate specificity determines the biosynthesis of branched-chain and/or straight-chain of fatty acids. The protein is Beta-ketoacyl-[acyl-carrier-protein] synthase III of Staphylococcus aureus (strain COL).